A 365-amino-acid polypeptide reads, in one-letter code: Sulfate/thiosulfate import ATP-binding protein CysA (365 aa).

In terms of domain architecture, ABC transporter spans 3–237; that stretch reads IEIARIKKSF…PATRFVLEFM (235 aa). 35-42 contributes to the ATP binding site; that stretch reads GPSGSGKT.

It belongs to the ABC transporter superfamily. Sulfate/tungstate importer (TC 3.A.1.6) family. The complex is composed of two ATP-binding proteins (CysA), two transmembrane proteins (CysT and CysW) and a solute-binding protein (CysP).

Its subcellular location is the cell inner membrane. The enzyme catalyses sulfate(out) + ATP + H2O = sulfate(in) + ADP + phosphate + H(+). It carries out the reaction thiosulfate(out) + ATP + H2O = thiosulfate(in) + ADP + phosphate + H(+). Its function is as follows. Part of the ABC transporter complex CysAWTP involved in sulfate/thiosulfate import. Responsible for energy coupling to the transport system. In Salmonella typhimurium (strain LT2 / SGSC1412 / ATCC 700720), this protein is Sulfate/thiosulfate import ATP-binding protein CysA.